The chain runs to 38 residues: Exendin-1 (38 aa).

The O-linked (HexNAc...) serine; in Exendin-1 and Exendin-1b glycan is linked to Ser-32.

It belongs to the glucagon family. O-linked glycan consists of Hex-HexNAc saccharide. In terms of processing, glycosylation may be of interest for the biological stability of exendin-1 and exendin-1b. Expressed by the venom gland.

It localises to the secreted. Its function is as follows. O-linked and free exendin-1 and exendin-1b have vasoactive intestinal peptide(VIP)/secretin-like biological activities. They interact with rat and human VIP receptors 1 (VIPR1) and 2 (VIPR2), with the highest affinity for the human VIPR2. They induce hypotension that is mediated by relaxation of cardiac smooth muscle. The chain is Exendin-1 from Heloderma horridum horridum (Mexican beaded lizard).